The primary structure comprises 250 residues: Hemocyanin, units C and D (250 aa).

Cu cation is bound at residue His1. Residues 1–106 are unit C; sequence HGSTKWCPSP…RAWIEPVTSA (106 aa). Cys7 and Cys18 are oxidised to a cystine. Positions 19–21 form a cross-link, 2'-(S-cysteinyl)-histidine (Cys-His); it reads CHH. Residues His21 and His143 each coordinate Cu cation. Residues 107-250 are unit D; that stretch reads VRIRKNLNDL…DAQDVIYNNH (144 aa). Residues Cys149 and Cys160 are joined by a disulfide bond. A cross-link (2'-(S-cysteinyl)-histidine (Cys-His)) is located at residues 161–163; the sequence is CLH. His172 is a Cu cation binding site.

It belongs to the tyrosinase family. Hemocyanin subfamily. Decamers of large identical subunits (390 kDa), each containing 8 globular oxygen-binding functional units. Cu(2+) is required as a cofactor.

In terms of biological role, hemocyanins are copper-containing oxygen carriers occurring freely dissolved in the hemolymph of many mollusks and arthropods. In Sepia officinalis (Common cuttlefish), this protein is Hemocyanin, units C and D.